We begin with the raw amino-acid sequence, 360 residues long: Phosphoserine aminotransferase (360 aa).

An L-glutamate-binding site is contributed by arginine 41. Pyridoxal 5'-phosphate-binding residues include tryptophan 101, threonine 152, aspartate 172, and glutamine 195. Lysine 196 carries the post-translational modification N6-(pyridoxal phosphate)lysine. Pyridoxal 5'-phosphate is bound at residue 237-238 (NT).

It belongs to the class-V pyridoxal-phosphate-dependent aminotransferase family. SerC subfamily. Homodimer. It depends on pyridoxal 5'-phosphate as a cofactor.

The protein resides in the cytoplasm. The enzyme catalyses O-phospho-L-serine + 2-oxoglutarate = 3-phosphooxypyruvate + L-glutamate. The catalysed reaction is 4-(phosphooxy)-L-threonine + 2-oxoglutarate = (R)-3-hydroxy-2-oxo-4-phosphooxybutanoate + L-glutamate. The protein operates within amino-acid biosynthesis; L-serine biosynthesis; L-serine from 3-phospho-D-glycerate: step 2/3. It participates in cofactor biosynthesis; pyridoxine 5'-phosphate biosynthesis; pyridoxine 5'-phosphate from D-erythrose 4-phosphate: step 3/5. Functionally, catalyzes the reversible conversion of 3-phosphohydroxypyruvate to phosphoserine and of 3-hydroxy-2-oxo-4-phosphonooxybutanoate to phosphohydroxythreonine. The chain is Phosphoserine aminotransferase from Paraburkholderia phymatum (strain DSM 17167 / CIP 108236 / LMG 21445 / STM815) (Burkholderia phymatum).